The sequence spans 541 residues: Nuclear receptor subfamily 5 group A member 2 (541 aa).

Residues 1–10 (MSSNSDTGDL) show a composition bias toward polar residues. The disordered stretch occupies residues 1–35 (MSSNSDTGDLQESLKHGLTPIGAGLPDRHGSPIPA). The nuclear receptor DNA-binding region spans 83-154 (EELCPVCGDK…KCLSVGMKLE (72 aa)). Residues Cys86, Cys89, Cys103, Cys106, Cys122, Cys128, Cys138, and Cys141 each contribute to the Zn(2+) site. NR C4-type zinc fingers lie at residues 86–106 (CPVC…CESC) and 122–146 (CIEN…FQKC). The tract at residues 152 to 167 (KLEAVRADRMRGGRNK) is C-terminal extension (CTE). An FTZ-F1 box motif is present at residues 168–187 (FGPMYKRDRALKQQKKALIR). A Glycyl lysine isopeptide (Lys-Gly) (interchain with G-Cter in SUMO1) cross-link involves residue Lys270. In terms of domain architecture, NR LBD spans 300 to 539 (SIPHLILELL…NLLIEMLHAK (240 aa)). Residues 421–424 (GATL), Tyr516, and Lys520 each bind a phospholipid derivative. The interval 528–539 (YNNLLIEMLHAK) is AF-2.

This sequence belongs to the nuclear hormone receptor family. NR5 subfamily. As to quaternary structure, monomer; Binds DNA as a monomer. Interacts with nuclear receptor corepressors NR0B1 and NR0B2; repressing NR5A2 nuclear receptor activity. Interacts with nuclear receptor coactivators CTNNB1, PPARGC1A and NCOA2; interaction takes place following ligand-binding and promotes target gene activation. Interacts (when sumoylated) with GPS2; interaction with GPS2 onto hepatic acute phase protein promoters prevents N-Cor corepressor complex dissociation. Interacts with HNF1A. Interacts with GRIP1. In terms of processing, sumoylated by SUMO1 at Lys-270 during the hepatic acute phase response, leading to promote interaction with GPS2 and prevent N-Cor corepressor complex dissociation. Abundantly expressed in pancreas, less in liver, very low levels in heart and lung. Expressed in the Hep-G2 cell line. Isoform 1 and isoform 2 seem to be present in fetal and adult liver and Hep-G2 cells.

It localises to the nucleus. The protein localises to the chromosome. With respect to regulation, activated by synthetic agonists RR-RJW100, SR-RJW100, endo sulfamide compound 6N and GSK8470. In terms of biological role, orphan nuclear receptor that binds DNA as a monomer to the 5'-TCAAGGCCA-3' sequence and controls expression of target genes: regulates key biological processes, such as early embryonic development, cholesterol and bile acid synthesis pathways, as well as liver and pancreas morphogenesis. Ligand-binding causes conformational change which causes recruitment of coactivators, promoting target gene activation. The specific ligand is unknown, but specific phospholipids, such as phosphatidylethanolamine, phosphatidylserine, dilauroyl phosphatidylcholine and diundecanoyl phosphatidylcholine can act as ligand in vitro. Acts as a pioneer transcription factor, which unwraps target DNA from histones and elicits local opening of closed chromatin. Plays a central role during preimplantation stages of embryonic development. Plays a minor role in zygotic genome activation (ZGA) by regulating a small set of two-cell stage genes. Plays a major role in morula development (2-16 cells embryos) by acting as a master regulator at the 8-cell stage, controlling expression of lineage-specifying transcription factors and genes involved in mitosis, telomere maintenance and DNA repair. Zygotic NR5A2 binds to both closed and open chromatin with other transcription factors, often at SINE B1/Alu repeats DNA elements, promoting chromatin accessibility at nearby regulatory regions. Also involved in the epiblast stage of development and embryonic stem cell pluripotency, by promoting expression of POU5F1/OCT4. Regulates other processes later in development, such as formation of connective tissue in lower jaw and middle ear, neural stem cell differentiation, ovarian follicle development and Sertoli cell differentiation. Involved in exocrine pancreas development and acinar cell differentiation. Acts as an essential transcriptional regulator of lipid metabolism. Key regulator of cholesterol 7-alpha-hydroxylase gene (CYP7A) expression in liver. Also acts as a negative regulator of inflammation in different organs, such as, liver and pancreas. Protects against intestinal inflammation via its ability to regulate glucocorticoid production. Plays an anti-inflammatory role during the hepatic acute phase response by acting as a corepressor: inhibits the hepatic acute phase response by preventing dissociation of the N-Cor corepressor complex. Acts as a regulator of immunity by promoting lymphocyte T-cell development, proliferation and effector functions. Also involved in resolution of endoplasmic reticulum stress in the liver. In constrast to isoform 1 and isoform 2, does not induce cholesterol 7-alpha-hydroxylase gene (CYP7A) promoter activity. Functionally, (Microbial infection) Plays a crucial role for hepatitis B virus gene transcription and DNA replication. Mechanistically, synergistically cooperates with HNF1A to up-regulate the activity of one of the critical cis-elements in the hepatitis B virus genome enhancer II (ENII). This Homo sapiens (Human) protein is Nuclear receptor subfamily 5 group A member 2.